Consider the following 338-residue polypeptide: uncharacterized protein (338 aa).

This is an uncharacterized protein from Thermoproteus tenax (TTV1).